Here is a 355-residue protein sequence, read N- to C-terminus: UDP-N-acetylglucosamine--N-acetylmuramyl-(pentapeptide) pyrophosphoryl-undecaprenol N-acetylglucosamine transferase (355 aa).

Residues 15 to 17 (TGG), N127, R163, S191, I244, 263 to 268 (ALTVSE), and Q288 each bind UDP-N-acetyl-alpha-D-glucosamine.

This sequence belongs to the glycosyltransferase 28 family. MurG subfamily.

It localises to the cell inner membrane. The catalysed reaction is di-trans,octa-cis-undecaprenyl diphospho-N-acetyl-alpha-D-muramoyl-L-alanyl-D-glutamyl-meso-2,6-diaminopimeloyl-D-alanyl-D-alanine + UDP-N-acetyl-alpha-D-glucosamine = di-trans,octa-cis-undecaprenyl diphospho-[N-acetyl-alpha-D-glucosaminyl-(1-&gt;4)]-N-acetyl-alpha-D-muramoyl-L-alanyl-D-glutamyl-meso-2,6-diaminopimeloyl-D-alanyl-D-alanine + UDP + H(+). Its pathway is cell wall biogenesis; peptidoglycan biosynthesis. Functionally, cell wall formation. Catalyzes the transfer of a GlcNAc subunit on undecaprenyl-pyrophosphoryl-MurNAc-pentapeptide (lipid intermediate I) to form undecaprenyl-pyrophosphoryl-MurNAc-(pentapeptide)GlcNAc (lipid intermediate II). The chain is UDP-N-acetylglucosamine--N-acetylmuramyl-(pentapeptide) pyrophosphoryl-undecaprenol N-acetylglucosamine transferase from Salmonella arizonae (strain ATCC BAA-731 / CDC346-86 / RSK2980).